A 463-amino-acid polypeptide reads, in one-letter code: MDSRDAPEVPGIRQPANVTTDLKMIICKLLNSPKPAKTFPGSQPVSFQHVDIEEKLLAQDYYVCEKTDGLRALMLIIMNPVTKEQGCFLIDRENNYYLLNGFRFPRLPRANRKELLETLQDGTLVDGELVVQTNPATRLRELRYLMFDCLAINGRALVQSPTSSRLAHLGKEFYKPYYDLRAYYPDRCATFPFKLSMKHMNFSFDLDRVAGSLDKLPHVSDGLIFTAVDTPYTVGGKDSTLLKWKPEQENTVDFKMILEIPVVEDDTLPKKDRNRFYYNFDVKPSFHLYIWQGGPDVNTRLHDFEQPFSKKELEILHRTYKVFAELQISDEQWAKMKALEQPLNGRIVECAKDQETGEWKFLRFRDDKLNGNHVSVVQKVLESISDSVKLEDLEHMIPRIKARWEERKSKKRTHSSISGPMLPPVAETKAPREATQSRYIDDEDWSDEADDDDEDSLKRARIE.

The active-site N6-GMP-lysine intermediate is the Lys-66. Residues 404-463 (WEERKSKKRTHSSISGPMLPPVAETKAPREATQSRYIDDEDWSDEADDDDEDSLKRARIE) are disordered. A compositionally biased stretch (acidic residues) spans 441-455 (DDEDWSDEADDDDED).

This sequence belongs to the eukaryotic GTase family. Heterodimer. The mRNA-capping enzyme is composed of two separate chains alpha and beta, respectively a mRNA guanylyltransferase and an mRNA 5'-triphosphate monophosphatase.

The protein resides in the nucleus. The catalysed reaction is a 5'-end diphospho-ribonucleoside in mRNA + GTP + H(+) = a 5'-end (5'-triphosphoguanosine)-ribonucleoside in mRNA + diphosphate. Its function is as follows. Second step of mRNA capping. Transfer of the GMP moiety of GTP to the 5'-end of RNA via an enzyme-GMP covalent reaction intermediate. The chain is mRNA-capping enzyme subunit alpha (CEG1) from Eremothecium gossypii (strain ATCC 10895 / CBS 109.51 / FGSC 9923 / NRRL Y-1056) (Yeast).